Consider the following 37-residue polypeptide: Cytochrome b6-f complex subunit 5 (37 aa).

Residues 5–25 form a helical membrane-spanning segment; it reads LLSGIVLGMITVSAFGLFVAA.

This sequence belongs to the PetG family. As to quaternary structure, the 4 large subunits of the cytochrome b6-f complex are cytochrome b6, subunit IV (17 kDa polypeptide, PetD), cytochrome f and the Rieske protein, while the 4 small subunits are PetG, PetL, PetM and PetN. The complex functions as a dimer.

It is found in the plastid. Its subcellular location is the chloroplast thylakoid membrane. Its function is as follows. Component of the cytochrome b6-f complex, which mediates electron transfer between photosystem II (PSII) and photosystem I (PSI), cyclic electron flow around PSI, and state transitions. PetG is required for either the stability or assembly of the cytochrome b6-f complex. This is Cytochrome b6-f complex subunit 5 from Thalassiosira pseudonana (Marine diatom).